The chain runs to 38 residues: Large ribosomal subunit protein bL36 (38 aa).

The protein belongs to the bacterial ribosomal protein bL36 family.

The polypeptide is Large ribosomal subunit protein bL36 (Ralstonia nicotianae (strain ATCC BAA-1114 / GMI1000) (Ralstonia solanacearum)).